Consider the following 98-residue polypeptide: Cytochrome b (98 aa).

3 helical membrane passes run 1–18, 42–63, and 78–98; these read LLGLCLITQILTGLFLAM, WLIRNVHANGASFFFICLYLHV, and WNIGVVLLLLTMMTAFVGYVL. The heme b site is built by histidine 48 and histidine 62.

Belongs to the cytochrome b family. In terms of assembly, the cytochrome bc1 complex contains 3 respiratory subunits (MT-CYB, CYC1 and UQCRFS1), 2 core proteins (UQCRC1 and UQCRC2) and probably 6 low-molecular weight proteins. The cofactor is heme b.

Its subcellular location is the mitochondrion inner membrane. Its function is as follows. Component of the ubiquinol-cytochrome c reductase complex (complex III or cytochrome b-c1 complex) that is part of the mitochondrial respiratory chain. The b-c1 complex mediates electron transfer from ubiquinol to cytochrome c. Contributes to the generation of a proton gradient across the mitochondrial membrane that is then used for ATP synthesis. This is Cytochrome b (mt-cyb) from Scaphirhynchus platorynchus (Shovelnose sturgeon).